Consider the following 490-residue polypeptide: Bifunctional protein HldE (490 aa).

Residues 1–330 (MERKEIESLF…AEIGHAHPDS (330 aa)) are ribokinase. Residue 205 to 208 (NRKE) participates in ATP binding. The active site involves aspartate 275. Residues 356–490 (FTNGCFDLLH…EKIRTGSIKE (135 aa)) are cytidylyltransferase.

This sequence in the N-terminal section; belongs to the carbohydrate kinase PfkB family. The protein in the C-terminal section; belongs to the cytidylyltransferase family. In terms of assembly, homodimer.

It catalyses the reaction D-glycero-beta-D-manno-heptose 7-phosphate + ATP = D-glycero-beta-D-manno-heptose 1,7-bisphosphate + ADP + H(+). It carries out the reaction D-glycero-beta-D-manno-heptose 1-phosphate + ATP + H(+) = ADP-D-glycero-beta-D-manno-heptose + diphosphate. Its pathway is nucleotide-sugar biosynthesis; ADP-L-glycero-beta-D-manno-heptose biosynthesis; ADP-L-glycero-beta-D-manno-heptose from D-glycero-beta-D-manno-heptose 7-phosphate: step 1/4. The protein operates within nucleotide-sugar biosynthesis; ADP-L-glycero-beta-D-manno-heptose biosynthesis; ADP-L-glycero-beta-D-manno-heptose from D-glycero-beta-D-manno-heptose 7-phosphate: step 3/4. Its function is as follows. Catalyzes the phosphorylation of D-glycero-D-manno-heptose 7-phosphate at the C-1 position to selectively form D-glycero-beta-D-manno-heptose-1,7-bisphosphate. Catalyzes the ADP transfer from ATP to D-glycero-beta-D-manno-heptose 1-phosphate, yielding ADP-D-glycero-beta-D-manno-heptose. This chain is Bifunctional protein HldE, found in Geotalea uraniireducens (strain Rf4) (Geobacter uraniireducens).